Here is a 254-residue protein sequence, read N- to C-terminus: Thiazole synthase (254 aa).

Residue Lys-96 is the Schiff-base intermediate with DXP of the active site. Residues Gly-157, 183 to 184 (AG), and 205 to 206 (NT) contribute to the 1-deoxy-D-xylulose 5-phosphate site.

The protein belongs to the ThiG family. Homotetramer. Forms heterodimers with either ThiH or ThiS.

The protein localises to the cytoplasm. It carries out the reaction [ThiS sulfur-carrier protein]-C-terminal-Gly-aminoethanethioate + 2-iminoacetate + 1-deoxy-D-xylulose 5-phosphate = [ThiS sulfur-carrier protein]-C-terminal Gly-Gly + 2-[(2R,5Z)-2-carboxy-4-methylthiazol-5(2H)-ylidene]ethyl phosphate + 2 H2O + H(+). The protein operates within cofactor biosynthesis; thiamine diphosphate biosynthesis. Functionally, catalyzes the rearrangement of 1-deoxy-D-xylulose 5-phosphate (DXP) to produce the thiazole phosphate moiety of thiamine. Sulfur is provided by the thiocarboxylate moiety of the carrier protein ThiS. In vitro, sulfur can be provided by H(2)S. The sequence is that of Thiazole synthase from Bacillus velezensis (strain DSM 23117 / BGSC 10A6 / LMG 26770 / FZB42) (Bacillus amyloliquefaciens subsp. plantarum).